The primary structure comprises 154 residues: Large-conductance mechanosensitive channel (154 aa).

Helical transmembrane passes span 14–34 and 86–106; these read VVDL…VNSL and VFIN…FFVV.

It belongs to the MscL family. As to quaternary structure, homopentamer.

It is found in the cell membrane. Its function is as follows. Channel that opens in response to stretch forces in the membrane lipid bilayer. May participate in the regulation of osmotic pressure changes within the cell. The protein is Large-conductance mechanosensitive channel of Dehalococcoides mccartyi (strain CBDB1).